Consider the following 695-residue polypeptide: Segment polarity protein dishevelled homolog DVL-1 (695 aa).

The DIX domain maps to 1–85 (MAETKIIYHM…RVVSWLVLAE (85 aa)). The tract at residues 89 to 237 (SDAGSQGTDS…LRQADRASSF (149 aa)) is disordered. Over residues 142 to 151 (SHRRERARRR) the composition is skewed to basic residues. A compositionally biased stretch (basic and acidic residues) spans 152–171 (NREEAARTNGHPRGDRRRDV). The span at 176 to 192 (DSASTALSSELESSSFV) shows a compositional bias: low complexity. Ser-194 is modified (phosphoserine). The segment covering 200–214 (TSRLSSSTEQSTSSR) has biased composition (low complexity). A compositionally biased stretch (basic residues) spans 215–228 (LIRKHKRRRRKQRL). The 73-residue stretch at 251 to 323 (TVTLNMERHH…NDDAVRVLRE (73 aa)) folds into the PDZ domain. Residues 425–499 (PDSGLEIRDR…SEQCYYVFGD (75 aa)) enclose the DEP domain. The segment at 543–667 (PGPPPCFPPA…PGGPPVRELA (125 aa)) is disordered. The segment covering 551–580 (PAYQDPGFSYGSGSTGSQQSEGSKSSGSTR) has biased composition (low complexity). Over residues 625–636 (SRGSSPRSQASA) the composition is skewed to polar residues.

Belongs to the DSH family. As to quaternary structure, interacts with CXXC4. Interacts (via PDZ domain) with NXN. Interacts with BRD7 and INVS. Interacts (via PDZ domain) with VANGL1 and VANGL2 (via C-terminus). Interacts with ARRB1; the interaction is enhanced by phosphorylation of DVL1. Interacts with CYLD. Interacts (via PDZ domain) with RYK. Self-associates (via DIX domain) and forms higher homooligomers. Interacts (via PDZ domain) with DACT1 and FZD7, where DACT1 and FZD7 compete for the same binding site. Interacts (via DEP domain) with MUSK; the interaction is direct and mediates the formation a DVL1, MUSK and PAK1 ternary complex involved in AChR clustering. Interacts (via PDZ domain) with TMEM88. Interacts with DCDC2. Interacts with FOXK2. Interacts with PKD1 (via extracellular domain). Interacts (via PDZ domain) with CCDC88C/DAPLE; competes with CCDC88C for binding to frizzled receptor FZD7 and dissociates from CCDC88C following initiation of non-canonical Wnt signaling when CCDC88C displaces DVL1 from ligand-activated FZD7. Ubiquitinated; undergoes both 'Lys-48'-linked ubiquitination, leading to its subsequent degradation by the ubiquitin-proteasome pathway, and 'Lys-63'-linked ubiquitination. The interaction with INVS is required for ubiquitination. Deubiquitinated by CYLD, which acts on 'Lys-63'-linked ubiquitin chains.

The protein localises to the cell membrane. It is found in the cytoplasm. The protein resides in the cytosol. Its subcellular location is the cytoplasmic vesicle. In terms of biological role, participates in Wnt signaling by binding to the cytoplasmic C-terminus of frizzled family members and transducing the Wnt signal to down-stream effectors. Plays a role both in canonical and non-canonical Wnt signaling. Plays a role in the signal transduction pathways mediated by multiple Wnt genes. Required for LEF1 activation upon WNT1 and WNT3A signaling. DVL1 and PAK1 form a ternary complex with MUSK which is important for MUSK-dependent regulation of AChR clustering during the formation of the neuromuscular junction (NMJ). In Homo sapiens (Human), this protein is Segment polarity protein dishevelled homolog DVL-1 (DVL1).